The chain runs to 350 residues: Secreted effector protein PipB2 (350 aa).

4 consecutive Pentapeptide repeat domains span residues 162–201 (ANLTAENLCDADLSGANLEGAVLFMADCEGANFKGANLSG), 202–241 (TSLGDSNFKNACLEDGIMCGATLDHANLTGANLQHASLLG), 247–286 (CNCSGANMDHTNLSGATLIRADMSGATLQGATIMAAIMED), and 287–326 (AVLTRANLRKASFISTNLDGADLAEANLNNTCFKDCTLTH).

In terms of assembly, interacts with the host kinesin light chain (KLC), a subunit of the kinesin-1 motor complex.

The protein resides in the secreted. It is found in the host membrane. In terms of biological role, effector proteins function to alter host cell physiology and promote bacterial survival in host tissues. Involved in the reorganization of late endosome/lysosome (LE/Lys) compartments in mammalian cells. Necessary and sufficient to link kinesin-1 onto the Salmonella-containing vacuole (SCV) membrane. Required for centrifugal extension of lysosomal glycoprotein-rich membrane tubules, known as Salmonella-induced filaments (Sifs), away from the SCV and toward the cell periphery. Required for virulence, but not for intracellular survival and replication in phagocytic cells. This Salmonella paratyphi A (strain ATCC 9150 / SARB42) protein is Secreted effector protein PipB2 (pipB2).